A 195-amino-acid chain; its full sequence is Packaging protein 2 (195 aa).

The tract at residues 1–124 is disordered; the sequence is MAPKKKLQLP…QEQQQRQGYR (124 aa). The span at 15-53 shows a compositional bias: acidic residues; that stretch reads TDEEEYWDSQAEEVLDEEEEMMEDWDSLDEASEAEEVSD. Residues 54-63 show a composition bias toward low complexity; that stretch reads ETPSPSVAFP.

This sequence belongs to the adenoviridae splicing factor family. In terms of assembly, part of a genome packaging complex composed of packaging proteins 1, 2 and 3; this complex specifically binds to the packaging sequence on the left end of viral genomic DNA and performs packaging of the viral genome. Self-assembles into higher-order structures.

The protein localises to the host nucleus. Its function is as follows. Component of the packaging machinery which encapsidates the viral DNA into preformed capsids and transcriptional activator of the viral major late promoter (MLP). Binds, along with packaging proteins 1 and 3, to the specific packaging sequence on the left end of viral genomic DNA and plays an active role in packaging of the viral genome into preformed capsids. Specifically binds to the 5'-TTTG-3' nucleotides of the repeats making up the packaging sequence. Forms a transcription factor called DEF-A through cooperative binding with packaging protein 1. DEF-A binds to downstream elements of the major late promoter (MLP) and stimulates transcription from the MLP after initiation of viral DNA replication. Simultaneously suppresses early gene expression and is thus likely to participate in the early-late switch in the expression pattern of the late viral proteins. May as well enhance transcription from IVa2 and pIX promoters. In Homo sapiens (Human), this protein is Packaging protein 2.